Here is a 218-residue protein sequence, read N- to C-terminus: Small ribosomal subunit protein mS34 (218 aa).

The disordered stretch occupies residues 178–218 (RQKNGDPSTEEPMLSLERIRTDPWDYPENQEAKKKTKGTAV).

This sequence belongs to the mitochondrion-specific ribosomal protein mS34 family. Component of the mitochondrial ribosome small subunit (28S) which comprises a 12S rRNA and about 30 distinct proteins.

The protein resides in the mitochondrion. In terms of biological role, required for mitochondrial translation, plays a role in maintaining the stability of the small ribosomal subunit and the 12S rRNA that are required for mitoribosome formation. This Bos taurus (Bovine) protein is Small ribosomal subunit protein mS34.